Here is a 355-residue protein sequence, read N- to C-terminus: Probable aldo-keto reductase 3 (355 aa).

Y70 functions as the Proton donor in the catalytic mechanism. Substrate is bound at residue H138. NADP(+) is bound at residue 217-227; sequence SPLGRGFFSSG.

This sequence belongs to the aldo/keto reductase family.

This Oryza sativa subsp. japonica (Rice) protein is Probable aldo-keto reductase 3.